The sequence spans 471 residues: Tripartite motif-containing protein 60 (471 aa).

Residues 16–57 (CPICLEYLKDPVTINCGHNFCRSCLSVSWKDLDDTFPCPVCR) form an RING-type zinc finger. The B box-type zinc-finger motif lies at 92 to 133 (KENAMCEKHNQFLTLFCVKDLEILCTQCSFSTKHQKHYICPI). Cys97, His100, Cys119, and His125 together coordinate Zn(2+). Positions 171-223 (ELKKKVEYKREEINSEFEQIRLFLQNEQEMILRQIQDEEMNILAKLNENLVEL) form a coiled coil. The 194-residue stretch at 277 to 470 (FSLPPQYSGL…LKICSVSDSE (194 aa)) folds into the B30.2/SPRY domain.

It belongs to the TRIM/RBCC family.

In terms of biological role, E3 SUMO-protein ligase that mediates SUMOylation of TAB2 leading to inhibition of NF-kappa-B and MAPK pathways by suppressing the TRAF6/TAB2/TAK1 complex. This chain is Tripartite motif-containing protein 60 (TRIM60), found in Homo sapiens (Human).